The primary structure comprises 334 residues: WD repeat domain 54 (334 aa).

WD repeat units lie at residues 162–206, 208–247, and 250–289; these read GHQT…TLLT, IAGFGVPCPSVQLWQGIVAAGYGNGQVRLYDAGTGALHIQ, and AHARTISALDLAPEVGKLLSAAEDTFVHIWKLNRNPESGS.

As to quaternary structure, homodimer and homotrimer; forms tight forms of dimers and trimers. Interacts with IZUMO1 and IZUMO1R/JUNO. Cross-linked to tightly form both dimers and trimers by TGM2. Cross-linking enhances the activation of EGF receptor-mediated signaling pathway. Cross-linking is inhibited by EGF. In terms of processing, ubiquitinated. EGF increases ubiquitination. In terms of tissue distribution, widely expressed in the ovary and testis (at protein level).

It is found in the vesicle. Its subcellular location is the cytoplasm. The protein resides in the cell membrane. In terms of biological role, plays a role in the adhesion and fusion of the sperm-oocyte membrane through its interactions with IZUMO1 and IZUMO1R/JUNO. When cross-linked to form dimers and trimers, it has a regulatory effect on ERK signaling pathway activity in response to EGF stimulation. Colocalizes with the EGF receptor in WDR54-specific vesicle where it sustains the internalization and controls the degradation of the EGF receptor after EGF stimulation. The sequence is that of WD repeat domain 54 (Wdr54) from Rattus norvegicus (Rat).